Here is a 305-residue protein sequence, read N- to C-terminus: MSTIGYIGASICLLGVLSSLFSISHIVRDINSLRDEVEGRVDEFKVLADDTWQRLLVLQSPTGETENVMPSIFRSKRFVYPGMCNCDSNSQGCPAGPPGPPGLPGKRGDEGVVGDLGRSGASGISLAAVHHIPGGCINCPAGPAGPPGQQGPVGPQGFPGVVGTCGPSGDDGQPGPAGPLGDKGAQGPKGFDGADGPDGMPGTAYFPGAVGQPGEPGWLGQPGLPGKHGEPGQDGEEGPKGAPGTPGSNGRDAYPGQPGKAGEPGAVGKDANYCPCPARRDSKTESVHEPPAASQNGGYRKAKRH.

Disordered stretches follow at residues alanine 95–glycine 117 and proline 146–histidine 305. 4 triple-helical region regions span residues glycine 96–serine 125, glycine 142–alanine 204, glycine 208–aspartate 252, and glycine 256–aspartate 270. The span at glutamine 150–valine 162 shows a compositional bias: low complexity. Residues alanine 278–histidine 288 show a composition bias toward basic and acidic residues.

The protein belongs to the cuticular collagen family. Collagen polypeptide chains are complexed within the cuticle by disulfide bonds and other types of covalent cross-links.

In terms of biological role, nematode cuticles are composed largely of collagen-like proteins. The cuticle functions both as an exoskeleton and as a barrier to protect the worm from its environment. This is Putative cuticle collagen 90 (col-90) from Caenorhabditis elegans.